Here is a 297-residue protein sequence, read N- to C-terminus: Translocase of chloroplast 33, chloroplastic (297 aa).

In terms of domain architecture, AIG1-type G spans 34 to 258 (MNSMTVLVLG…HVDKKMVDGS (225 aa)). A helical transmembrane segment spans residues 37–53 (MTVLVLGKGGVGKSSTV). Residues 46-51 (GVGKSS) and 65-70 (SPFQAE) contribute to the GTP site. Ser-50 and Gln-68 together coordinate Mg(2+). 2 homodimerization regions span residues 65-68 (SPFQ) and 125-130 (RLDVYR). His-160 is a GTP binding site. Ser-181 carries the phosphoserine modification. A GTP-binding site is contributed by 208–209 (EN).

The protein belongs to the TRAFAC class TrmE-Era-EngA-EngB-Septin-like GTPase superfamily. AIG1/Toc34/Toc159-like paraseptin GTPase family. TOC34 subfamily. Homodimer, heterodimer with TOC34 and TOC159, and monomer. The homodimerization and the dimerization with TOC159 require the binding of GTP on Arg-130, and a hypothetical coGAP factor. The dimeric form has a higher GTPase activity than the monomeric form. Part of the TOC core complex that includes 1 protein for the specific recognition of transit peptides surrounded by a ring composed of four proteins forming translocation channels, and four to five GTP-binding proteins providing energy. This core complex can interact with components of the TIC complex to form a larger import complex. Chloroplastic protein precursor such as prSS (precursor of the RuBisCO small subunit) interacts with these complexes. The TOC complex contains a specific subset of polar lipids such as digalactosyldiacylglyceride (DGDG), phosphatidylcholine (PC) and phosphatidylglycerol (PG). Interacts at least with TOC75-3. Forms large complexes including TOC33, pPORA and OEP161 during pPORA import into plastids at the plastid envelope membrane. Interacts with SP1. It depends on Mg(2+) as a cofactor. In terms of processing, phosphorylated by a kinase present in the outer envelope of chloroplast. When Ser-181 is phosphorylated, the binding to preprotein, GTP and GDP is inhibited, and thus, GTPase activity is repressed. As to expression, mostly expressed in seedlings and flowers, and, to a lower extent, in roots, stems, and leaves.

Its subcellular location is the plastid. The protein localises to the chloroplast outer membrane. Its function is as follows. GTPase involved in protein precursor import into chloroplasts. Seems to recognize chloroplast-destined precursor proteins and regulate their presentation to the translocation channel through GTP hydrolysis. Binds GTP, GDP, XTP, but not ATP. Probably specialized in the import of nuclear encoded photosynthetic preproteins from the cytoplasm to the chloroplast, especially during early development stages. The polypeptide is Translocase of chloroplast 33, chloroplastic (TOC33) (Arabidopsis thaliana (Mouse-ear cress)).